A 319-amino-acid chain; its full sequence is MSEKTAVVLLQMGGPDSIAAVEPFLFNLFSDREIIKIGPALLQPFIARFICRRRAPKVEAYYEQIGGKSPIRELTEAQAKALETELGDGYRAFVAMRYWKPTTIDALAAIKREGISRVIALSLYPHYSRATAGSSINELKRVLGQAGVSFQVSYIDRFYDHPLYIKALAEKVEEGLSEFSDRSRVTLVFSAHSLPQSFIDDGDPYLSHIQATVRLVMERLGNIDYHLAFQSRAGPVKWLEPSTEEMMKRLATEGRKEMLMVPLSFVSDHIETLYEVDIQYAKEAKQLGIDKFRRSPSLNSSPLFIECLAELVKSVKGEG.

The Fe cation site is built by histidine 192 and glutamate 271.

Belongs to the ferrochelatase family.

Its subcellular location is the cytoplasm. It carries out the reaction heme b + 2 H(+) = protoporphyrin IX + Fe(2+). Its pathway is porphyrin-containing compound metabolism; protoheme biosynthesis; protoheme from protoporphyrin-IX: step 1/1. In terms of biological role, catalyzes the ferrous insertion into protoporphyrin IX. In Geotalea daltonii (strain DSM 22248 / JCM 15807 / FRC-32) (Geobacter daltonii), this protein is Ferrochelatase.